An 828-amino-acid chain; its full sequence is Periplasmic nitrate reductase (828 aa).

A signal peptide (tat-type signal) is located at residues 1 to 31 (MKLSRRSFMKANAVAAAAAAAGLSVPGVARA). Residues 39–95 (IKWDKAPCRFCGTGCGVLVGTQQGRVVACQGDPDAPVNRGLNCIKGYFLPKIMYGKD) enclose the 4Fe-4S Mo/W bis-MGD-type domain. Positions 46, 49, 53, and 81 each coordinate [4Fe-4S] cluster. Residues K83, Q150, N175, C179, 212 to 219 (WGANMAEM), 243 to 247 (STYQH), 262 to 264 (QSD), M372, Q376, N482, 508 to 509 (SD), K531, D558, and 718 to 727 (TGRVLEHWHT) contribute to the Mo-bis(molybdopterin guanine dinucleotide) site. Substrate is bound at residue F794. Mo-bis(molybdopterin guanine dinucleotide) contacts are provided by N802 and K819.

The protein belongs to the prokaryotic molybdopterin-containing oxidoreductase family. NasA/NapA/NarB subfamily. Component of the periplasmic nitrate reductase NapAB complex composed of NapA and NapB. [4Fe-4S] cluster is required as a cofactor. It depends on Mo-bis(molybdopterin guanine dinucleotide) as a cofactor. In terms of processing, predicted to be exported by the Tat system. The position of the signal peptide cleavage has not been experimentally proven.

It localises to the periplasm. The catalysed reaction is 2 Fe(II)-[cytochrome] + nitrate + 2 H(+) = 2 Fe(III)-[cytochrome] + nitrite + H2O. Its function is as follows. Catalytic subunit of the periplasmic nitrate reductase complex NapAB. Receives electrons from NapB and catalyzes the reduction of nitrate to nitrite. The protein is Periplasmic nitrate reductase of Escherichia coli O7:K1 (strain IAI39 / ExPEC).